We begin with the raw amino-acid sequence, 379 residues long: Caffeyl-CoA reductase-Etf complex subunit CarC (379 aa).

FAD-binding positions include 122–131 (FALTEPGAGS) and 155–157 (FIT). S131 is a binding site for substrate. Position 239–242 (239–242 (DVGR)) interacts with substrate. FAD is bound by residues R267, Q278, and 335–339 (QIHGG). E362 serves as the catalytic Proton acceptor. G363 serves as a coordination point for substrate. 364–366 (TSQ) contacts FAD.

Belongs to the acyl-CoA dehydrogenase family. In terms of assembly, part of the homotrimeric caffeyl-CoA reductase-Etf complex composed of (R)-2-hydroxyisocaproyl-CoA dehydratase CarC, and the electron transfer flavoprotein (ETF) alpha (CarE) and beta (CarD) subunits. Requires FAD as cofactor.

The protein localises to the cytoplasm. It carries out the reaction hydrocaffeoyl-CoA + 2 reduced [2Fe-2S]-[ferredoxin] + 2 NAD(+) = (E)-caffeoyl-CoA + 2 oxidized [2Fe-2S]-[ferredoxin] + 2 NADH. In terms of biological role, the Caffeyl-CoA reductase-Etf complex catalyzes the reduction of caffeyl-CoA to yield hydrocaffeyl-CoA. It couples the endergonic ferredoxin reduction with NADH as reductant to the exergonic reduction of caffeoyl-CoA with the same reductant. It uses the mechanism of electron bifurcation to overcome the steep energy barrier in ferredoxin reduction. Also reduces 4-coumaroyl-CoA and feruloyl-CoA. This Acetobacterium woodii (strain ATCC 29683 / DSM 1030 / JCM 2381 / KCTC 1655 / WB1) protein is Caffeyl-CoA reductase-Etf complex subunit CarC.